Here is a 397-residue protein sequence, read N- to C-terminus: Probable peptidoglycan glycosyltransferase FtsW (397 aa).

Over 1-18 (MSALTLTASKNTQTMTLD) the chain is Cytoplasmic. Residues 19–39 (LPLLGSALALAAIGLIMVTSA) traverse the membrane as a helical segment. Residues 40–58 (SVDFADDANGQALYYMWRH) lie on the Periplasmic side of the membrane. The chain crosses the membrane as a helical span at residues 59 to 79 (LTYLLAGVAVGFVILRLPLEW). The Cytoplasmic portion of the chain corresponds to 80–83 (WHKQ). The helical transmembrane segment at 84 to 104 (SWLLLVVALGFLVAVLIPGIG) threads the bilayer. Residues 105–112 (RTVNGSTR) lie on the Periplasmic side of the membrane. A helical membrane pass occupies residues 113 to 133 (WISLGVINIQASEIAKVCLAI). At 134 to 148 (YTASYLVRRLDEVRG) the chain is on the cytoplasmic side. Residues 149-169 (SWWGFAKPLLVLMLVALLLLM) form a helical membrane-spanning segment. The Periplasmic segment spans residues 170-172 (EPD). The helical transmembrane segment at 173–193 (FGALVVTMCAVVGMIFLSGVA) threads the bilayer. At 194 to 196 (LSR) the chain is on the cytoplasmic side. A helical transmembrane segment spans residues 197–217 (FAALLMFCVGSVALLAVSQPY). Topologically, residues 218–272 (RLKRLTAYTDPWADQFDSGYQLTQALIAFGRGEWSGVGLGNSVQKLFYLPEAHTD) are periplasmic. Residues 273 to 293 (FVFAIIAEELGLLGSLLIIVL) traverse the membrane as a helical segment. Topologically, residues 294-316 (FGVLLWRGMYVSRVAERAGQLFN) are cytoplasmic. Residues 317 to 337 (AYAGYGVTLLLGGQALINLGV) form a helical membrane-spanning segment. Residues 338-348 (NTGLLPTKGLT) are Periplasmic-facing. Residues 349–369 (LPLISYGGSSLIISCLCVAIL) traverse the membrane as a helical segment. At 370 to 397 (LRIGSEAVSGEQTEDESPKVKNRGGAQR) the chain is on the cytoplasmic side.

It belongs to the SEDS family. FtsW subfamily.

Its subcellular location is the cell inner membrane. It carries out the reaction [GlcNAc-(1-&gt;4)-Mur2Ac(oyl-L-Ala-gamma-D-Glu-L-Lys-D-Ala-D-Ala)](n)-di-trans,octa-cis-undecaprenyl diphosphate + beta-D-GlcNAc-(1-&gt;4)-Mur2Ac(oyl-L-Ala-gamma-D-Glu-L-Lys-D-Ala-D-Ala)-di-trans,octa-cis-undecaprenyl diphosphate = [GlcNAc-(1-&gt;4)-Mur2Ac(oyl-L-Ala-gamma-D-Glu-L-Lys-D-Ala-D-Ala)](n+1)-di-trans,octa-cis-undecaprenyl diphosphate + di-trans,octa-cis-undecaprenyl diphosphate + H(+). It participates in cell wall biogenesis; peptidoglycan biosynthesis. Functionally, peptidoglycan polymerase that is essential for cell division. This is Probable peptidoglycan glycosyltransferase FtsW from Hahella chejuensis (strain KCTC 2396).